The chain runs to 409 residues: tRNA-specific 2-thiouridylase MnmA (409 aa).

ATP-binding positions include 40–47 (GLSGGVDS) and L66. C127 serves as the catalytic Nucleophile. Residues C127 and C237 are joined by a disulfide bond. G152 provides a ligand contact to ATP. The disordered stretch occupies residues 156–179 (RIRHREDPEPQQALPGDSSGRHQL). Residues 187-189 (KDQ) are interaction with tRNA. C237 acts as the Cysteine persulfide intermediate in catalysis. The interaction with tRNA stretch occupies residues 342–343 (RY).

The protein belongs to the MnmA/TRMU family.

The protein resides in the cytoplasm. The enzyme catalyses S-sulfanyl-L-cysteinyl-[protein] + uridine(34) in tRNA + AH2 + ATP = 2-thiouridine(34) in tRNA + L-cysteinyl-[protein] + A + AMP + diphosphate + H(+). Catalyzes the 2-thiolation of uridine at the wobble position (U34) of tRNA, leading to the formation of s(2)U34. In Prochlorococcus marinus (strain MIT 9303), this protein is tRNA-specific 2-thiouridylase MnmA.